Consider the following 335-residue polypeptide: Tetraacyldisaccharide 4'-kinase (335 aa).

Position 58-65 (58-65 (TMGGAGKT)) interacts with ATP.

This sequence belongs to the LpxK family.

It catalyses the reaction a lipid A disaccharide + ATP = a lipid IVA + ADP + H(+). The protein operates within glycolipid biosynthesis; lipid IV(A) biosynthesis; lipid IV(A) from (3R)-3-hydroxytetradecanoyl-[acyl-carrier-protein] and UDP-N-acetyl-alpha-D-glucosamine: step 6/6. Functionally, transfers the gamma-phosphate of ATP to the 4'-position of a tetraacyldisaccharide 1-phosphate intermediate (termed DS-1-P) to form tetraacyldisaccharide 1,4'-bis-phosphate (lipid IVA). In Caulobacter vibrioides (strain ATCC 19089 / CIP 103742 / CB 15) (Caulobacter crescentus), this protein is Tetraacyldisaccharide 4'-kinase.